A 395-amino-acid chain; its full sequence is Prostaglandin D2 receptor 2 (395 aa).

The Extracellular portion of the chain corresponds to 1-33; that stretch reads MSANATLKPLCPILEQMSRLQSHSNTSIRYIDH. Residues N4 and N25 are each glycosylated (N-linked (GlcNAc...) asparagine). The chain crosses the membrane as a helical span at residues 34-56; sequence AAVLLHGLASLLGLVENGVILFV. The Cytoplasmic portion of the chain corresponds to 57 to 67; it reads VGCRMRQTVVT. Residues 68 to 89 form a helical membrane-spanning segment; that stretch reads TWVLHLALSDLLASASLPFFTY. The Extracellular portion of the chain corresponds to 90-106; the sequence is FLAVGHSWELGTTFCKL. C104 and C182 are disulfide-bonded. The chain crosses the membrane as a helical span at residues 107–127; the sequence is HSSIFFLNMFASGFLLSAISL. Topologically, residues 128–146 are cytoplasmic; it reads DRCLQVVRPVWAQNHRTVA. A helical membrane pass occupies residues 147-168; sequence AAHKVCLVLWALAVLNTVPYFV. Topologically, residues 169–210 are extracellular; that stretch reads FRDTISRLDGRIMCYYNVLLLNPGPDRDATCNSRQVALAVSK. Residues 211–231 traverse the membrane as a helical segment; the sequence is FLLAFLVPLAIIASSHAAVSL. Over 232–247 the chain is Cytoplasmic; sequence RLQHRGRRRPGRFVRL. Residues 248–269 form a helical membrane-spanning segment; it reads VAAVVAAFALCWGPYHVFSLLE. At 270–288 the chain is on the extracellular side; it reads ARAHANPGLRPLVWRGLPF. The helical transmembrane segment at 289-308 threads the bilayer; the sequence is VTSLAFFNSVANPVLYVLTC. The Cytoplasmic portion of the chain corresponds to 309-395; the sequence is PDMLRKLRRS…LNRALSSTSS (87 aa). The Involved in the recycling of CRTH2 motif lies at 330 to 333; sequence DSEL. S331 and S345 each carry phosphoserine. The segment at 333-363 is disordered; that stretch reads LGGAGSSRRRRTSSTARSASPLALCSRPEEP.

The protein belongs to the G-protein coupled receptor 1 family. Phosphorylated. In terms of tissue distribution, widespread expression. High expression in stomach, small intestine, heart and thymus. Intermediate expression in colon, spinal cord and peripheral blood and low expression in brain, skeletal muscle and spleen. Expressed also on Th2- and Tc2- type cells, eosinophils and basophils.

The protein resides in the cell membrane. In terms of biological role, receptor for prostaglandin D2 (PGD2). Coupled to the G(i)-protein. Receptor activation may result in pertussis toxin-sensitive decreases in cAMP levels and Ca(2+) mobilization. PI3K signaling is also implicated in mediating PTGDR2 effects. PGD2 induced receptor internalization. CRTH2 internalization can be regulated by diverse kinases such as, PKC, PKA, GRK2, GPRK5/GRK5 and GRK6. Receptor activation is responsible, at least in part, in immune regulation and allergic/inflammation responses. In Homo sapiens (Human), this protein is Prostaglandin D2 receptor 2 (PTGDR2).